A 195-amino-acid polypeptide reads, in one-letter code: Probable GTP-binding protein EngB (195 aa).

The EngB-type G domain maps to 24 to 195; sequence GLTEVALSGR…EIWNFIETYI (172 aa). Residues 32-39, 59-63, 77-80, 144-147, and 176-178 contribute to the GTP site; these read GRSNVGKS, GKTQT, DVPG, TKED, and YSS. Ser39 and Thr61 together coordinate Mg(2+).

It belongs to the TRAFAC class TrmE-Era-EngA-EngB-Septin-like GTPase superfamily. EngB GTPase family. The cofactor is Mg(2+).

Necessary for normal cell division and for the maintenance of normal septation. The sequence is that of Probable GTP-binding protein EngB from Staphylococcus epidermidis (strain ATCC 35984 / DSM 28319 / BCRC 17069 / CCUG 31568 / BM 3577 / RP62A).